We begin with the raw amino-acid sequence, 645 residues long: 1,4-alpha-glucan branching enzyme GlgB (645 aa).

The active-site Nucleophile is D309. E352 acts as the Proton donor in catalysis. A disordered region spans residues 619–645 (VKTRKGSKKQDGSKTKVRSNVTSRGKR). Residues 636-645 (RSNVTSRGKR) are compositionally biased toward polar residues.

It belongs to the glycosyl hydrolase 13 family. GlgB subfamily. As to quaternary structure, monomer.

The catalysed reaction is Transfers a segment of a (1-&gt;4)-alpha-D-glucan chain to a primary hydroxy group in a similar glucan chain.. Its pathway is glycan biosynthesis; glycogen biosynthesis. Its function is as follows. Catalyzes the formation of the alpha-1,6-glucosidic linkages in glycogen by scission of a 1,4-alpha-linked oligosaccharide from growing alpha-1,4-glucan chains and the subsequent attachment of the oligosaccharide to the alpha-1,6 position. This Bacillus cereus (strain B4264) protein is 1,4-alpha-glucan branching enzyme GlgB.